The sequence spans 336 residues: Probable deoxyhypusine synthase (336 aa).

Lys-308 serves as the catalytic Nucleophile.

This sequence belongs to the deoxyhypusine synthase family. NAD(+) is required as a cofactor.

It catalyses the reaction [eIF5A protein]-L-lysine + spermidine = [eIF5A protein]-deoxyhypusine + propane-1,3-diamine. The protein operates within protein modification; eIF5A hypusination. Catalyzes the NAD-dependent oxidative cleavage of spermidine and the subsequent transfer of the butylamine moiety of spermidine to the epsilon-amino group of a specific lysine residue of the eIF-5A precursor protein to form the intermediate deoxyhypusine residue. This is Probable deoxyhypusine synthase from Pyrococcus furiosus (strain ATCC 43587 / DSM 3638 / JCM 8422 / Vc1).